Reading from the N-terminus, the 497-residue chain is Transmembrane protein 200A (497 aa).

At 1-61 (MIATGGVITG…RGKIRLYSAS (61 aa)) the chain is on the cytoplasmic side. The span at 20–30 (TRSQYHLSAQS) shows a compositional bias: polar residues. The interval 20 to 44 (TRSQYHLSAQSPGPAPEKKTTKRKP) is disordered. The helical transmembrane segment at 62-82 (GFFLVLGVLILMAGIAMAVLG) threads the bilayer. Residues 83-127 (YWPHKDQPKAPETKMSANNTQSFGREQAGSIAQFLEQHMHSEKMK) lie on the Extracellular side of the membrane. Residue Asn100 is glycosylated (N-linked (GlcNAc...) asparagine). Residues 128-148 (MLGPFTMGIGIFIFICANAIL) traverse the membrane as a helical segment. At 149-497 (HENRDRETKV…LKRGTSETRF (349 aa)) the chain is on the cytoplasmic side. Over residues 353–375 (SNSATESASSTSSRSSLSPGSTS) the composition is skewed to low complexity. 2 disordered regions span residues 353 to 385 (SNSA…GAAR) and 400 to 438 (HSKS…GYTR). The span at 427-438 (RLDRSNSKGYTR) shows a compositional bias: basic and acidic residues.

This sequence belongs to the TMEM200 family.

It is found in the membrane. The protein is Transmembrane protein 200A (tmem200a) of Danio rerio (Zebrafish).